Consider the following 368-residue polypeptide: tRNA-specific 2-thiouridylase MnmA (368 aa).

ATP contacts are provided by residues 12 to 19 and Met38; that span reads GMSGGVDS. The segment at 98 to 100 is interaction with target base in tRNA; that stretch reads NPD. The active-site Nucleophile is the Cys103. A disulfide bridge connects residues Cys103 and Cys200. Gly128 contacts ATP. Residues 150–152 are interaction with tRNA; that stretch reads KDQ. The active-site Cysteine persulfide intermediate is Cys200. The tract at residues 313–314 is interaction with tRNA; the sequence is RY.

Belongs to the MnmA/TRMU family. Interacts with TusE.

It localises to the cytoplasm. The catalysed reaction is S-sulfanyl-L-cysteinyl-[protein] + uridine(34) in tRNA + AH2 + ATP = 2-thiouridine(34) in tRNA + L-cysteinyl-[protein] + A + AMP + diphosphate + H(+). In terms of biological role, catalyzes the 2-thiolation of uridine at the wobble position (U34) of tRNA(Lys), tRNA(Glu) and tRNA(Gln), leading to the formation of s(2)U34, the first step of tRNA-mnm(5)s(2)U34 synthesis. Sulfur is provided by IscS, via a sulfur-relay system. Binds ATP and its substrate tRNAs. The polypeptide is tRNA-specific 2-thiouridylase MnmA (Pectobacterium atrosepticum (strain SCRI 1043 / ATCC BAA-672) (Erwinia carotovora subsp. atroseptica)).